We begin with the raw amino-acid sequence, 295 residues long: Glycine--tRNA ligase alpha subunit (295 aa).

It belongs to the class-II aminoacyl-tRNA synthetase family. As to quaternary structure, tetramer of two alpha and two beta subunits.

It is found in the cytoplasm. The enzyme catalyses tRNA(Gly) + glycine + ATP = glycyl-tRNA(Gly) + AMP + diphosphate. The polypeptide is Glycine--tRNA ligase alpha subunit (Rhodospirillum rubrum (strain ATCC 11170 / ATH 1.1.1 / DSM 467 / LMG 4362 / NCIMB 8255 / S1)).